A 491-amino-acid chain; its full sequence is Ketol-acid reductoisomerase (NADP(+)) (491 aa).

Residues 16–207 (IKKCRFMKEN…GGHRAGVLES (192 aa)) enclose the KARI N-terminal Rossmann domain. Residues 44 to 47 (CGSQ), Lys67, Ser77, and 107 to 109 (DKQ) contribute to the NADP(+) site. The active site involves His131. Gly157 lines the NADP(+) pocket. 2 KARI C-terminal knotted domains span residues 208–344 (SFIA…NILS) and 345–484 (YSEK…MKEM). Mg(2+) contacts are provided by Asp216, Glu220, Glu389, and Glu393. Ser414 serves as a coordination point for substrate.

This sequence belongs to the ketol-acid reductoisomerase family. Mg(2+) is required as a cofactor.

It catalyses the reaction (2R)-2,3-dihydroxy-3-methylbutanoate + NADP(+) = (2S)-2-acetolactate + NADPH + H(+). It carries out the reaction (2R,3R)-2,3-dihydroxy-3-methylpentanoate + NADP(+) = (S)-2-ethyl-2-hydroxy-3-oxobutanoate + NADPH + H(+). It functions in the pathway amino-acid biosynthesis; L-isoleucine biosynthesis; L-isoleucine from 2-oxobutanoate: step 2/4. Its pathway is amino-acid biosynthesis; L-valine biosynthesis; L-valine from pyruvate: step 2/4. In terms of biological role, involved in the biosynthesis of branched-chain amino acids (BCAA). Catalyzes an alkyl-migration followed by a ketol-acid reduction of (S)-2-acetolactate (S2AL) to yield (R)-2,3-dihydroxy-isovalerate. In the isomerase reaction, S2AL is rearranged via a Mg-dependent methyl migration to produce 3-hydroxy-3-methyl-2-ketobutyrate (HMKB). In the reductase reaction, this 2-ketoacid undergoes a metal-dependent reduction by NADPH to yield (R)-2,3-dihydroxy-isovalerate. This is Ketol-acid reductoisomerase (NADP(+)) from Buchnera aphidicola subsp. Schizaphis graminum (strain Sg).